Reading from the N-terminus, the 90-residue chain is MSTAMNFGTKSFQPRPPDKGSFPLDHLGECKSFKEKFMKCLHNNNFENALCRKESKEYLECRMERKLMLQEPLEKLGFGDLTSGKSEAKK.

A compositionally biased stretch (polar residues) spans 1–12; it reads MSTAMNFGTKSF. Positions 1–20 are disordered; the sequence is MSTAMNFGTKSFQPRPPDKG. An N-acetylserine modification is found at Ser2. The CHCH domain occupies 27-69; that stretch reads LGECKSFKEKFMKCLHNNNFENALCRKESKEYLECRMERKLML. Short sequence motifs (cx9C motif) lie at residues 30–40 and 51–61; these read CKSFKEKFMKC and CRKESKEYLEC. Disulfide bonds link Cys30–Cys61 and Cys40–Cys51.

This sequence belongs to the COX19 family. Interacts with CHCHD4/MIA40 forming transient intermolecular disulfide bridges. Ubiquitously expressed. Highly expressed in skeletal muscle.

The protein localises to the cytoplasm. The protein resides in the cytosol. Its subcellular location is the mitochondrion intermembrane space. It localises to the mitochondrion. Functionally, required for the transduction of an SCO1-dependent redox signal from the mitochondrion to ATP7A to regulate cellular copper homeostasis. May be required for the assembly of mitochondrial cytochrome c oxidase. This Homo sapiens (Human) protein is Cytochrome c oxidase assembly protein COX19 (COX19).